A 189-amino-acid chain; its full sequence is Transcription factor FapR (189 aa).

This sequence belongs to the FapR family.

Its function is as follows. Transcriptional factor involved in regulation of membrane lipid biosynthesis by repressing genes involved in fatty acid and phospholipid metabolism. The sequence is that of Transcription factor FapR from Exiguobacterium sibiricum (strain DSM 17290 / CCUG 55495 / CIP 109462 / JCM 13490 / 255-15).